The following is a 635-amino-acid chain: Probable serine/threonine-protein kinase DDB_G0270146 (635 aa).

Residues 77–329 (VISDIAIGKG…AKELLSHPWI (253 aa)) enclose the Protein kinase domain. Residues 83-91 (IGKGAFATV) and K106 contribute to the ATP site. D199 acts as the Proton acceptor in catalysis. Residues 360–392 (SLLSNSSGGDDSVTDSDLSISNQSSRSSSFLLD) show a composition bias toward low complexity. Residues 360 to 405 (SLLSNSSGGDDSVTDSDLSISNQSSRSSSFLLDDGGGGGGSKNHTV) form a disordered region. Coiled-coil stretches lie at residues 417 to 456 (IEFN…KYRE) and 536 to 585 (KKAL…KDSS). The segment covering 540-582 (EAQKRREKEQEKLKEQEKLKEKKKEKDIKKEKDKKDKKDKQLK) has biased composition (basic and acidic residues). The disordered stretch occupies residues 540-635 (EAQKRREKEQ…GRSSSKIFNE (96 aa)). The segment covering 583–598 (DSSSSTTTTNSTPSTP) has biased composition (low complexity). Residues 626–635 (GRSSSKIFNE) show a composition bias toward polar residues.

It belongs to the protein kinase superfamily. STE Ser/Thr protein kinase family. Requires Mg(2+) as cofactor.

It catalyses the reaction L-seryl-[protein] + ATP = O-phospho-L-seryl-[protein] + ADP + H(+). The enzyme catalyses L-threonyl-[protein] + ATP = O-phospho-L-threonyl-[protein] + ADP + H(+). The sequence is that of Probable serine/threonine-protein kinase DDB_G0270146 from Dictyostelium discoideum (Social amoeba).